The sequence spans 123 residues: Fluoride-specific ion channel FluC (123 aa).

4 consecutive transmembrane segments (helical) span residues 3-23 (IAWV…LSNA), 34-54 (WGTL…FYLF), 67-87 (LVLV…LETL), and 99-119 (LLNM…GLVV). Na(+)-binding residues include Gly74 and Thr77.

It belongs to the fluoride channel Fluc/FEX (TC 1.A.43) family.

The protein localises to the cell inner membrane. It catalyses the reaction fluoride(in) = fluoride(out). With respect to regulation, na(+) is not transported, but it plays an essential structural role and its presence is essential for fluoride channel function. In terms of biological role, fluoride-specific ion channel. Important for reducing fluoride concentration in the cell, thus reducing its toxicity. The protein is Fluoride-specific ion channel FluC of Magnetococcus marinus (strain ATCC BAA-1437 / JCM 17883 / MC-1).